The sequence spans 123 residues: rRNA-processing protein cgr-1 (123 aa).

Low complexity predominate over residues 1–13; the sequence is MSSTTTTTQTTSQ. Disordered regions lie at residues 1–47 and 85–123; these read MSST…GLTS and EKRA…LINS. The stretch at 49-110 forms a coiled coil; it reads EKRAKERQLL…EKMHKKRVER (62 aa). A compositionally biased stretch (basic and acidic residues) spans 85-102; that stretch reads EKRAKKEEKERYEKMAEK. A compositionally biased stretch (basic residues) spans 103–123; it reads MHKKRVERLKRKEKRNKLINS.

This sequence belongs to the CGR1 family.

The protein localises to the nucleus. It is found in the nucleolus. Involved in nucleolar integrity and required for processing of the pre-rRNA for the 60S ribosome subunit. This Neurospora crassa (strain ATCC 24698 / 74-OR23-1A / CBS 708.71 / DSM 1257 / FGSC 987) protein is rRNA-processing protein cgr-1 (cgr-1).